A 139-amino-acid chain; its full sequence is Holo-[acyl-carrier-protein] synthase (139 aa).

The Mg(2+) site is built by Asp9 and Glu63.

It belongs to the P-Pant transferase superfamily. AcpS family. It depends on Mg(2+) as a cofactor.

The protein localises to the cytoplasm. The enzyme catalyses apo-[ACP] + CoA = holo-[ACP] + adenosine 3',5'-bisphosphate + H(+). Functionally, transfers the 4'-phosphopantetheine moiety from coenzyme A to a Ser of acyl-carrier-protein. The chain is Holo-[acyl-carrier-protein] synthase from Wigglesworthia glossinidia brevipalpis.